The following is a 198-amino-acid chain: Neutrophil gelatinase-associated lipocalin (198 aa).

An N-terminal signal peptide occupies residues 1–20 (MGLGVLCLALVLLGVLQSQA). Pyrrolidone carboxylic acid is present on Gln-21. A carboxymycobactin is bound at residue 72 to 74 (YST). Asn-85 carries N-linked (GlcNAc...) asparagine glycosylation. A disulfide bridge links Cys-96 with Cys-195. An enterobactin-binding site is contributed by Tyr-126. Positions 145, 154, and 158 each coordinate a carboxymycobactin. An enterobactin-binding site is contributed by Lys-154.

It belongs to the calycin superfamily. Lipocalin family. Monomer. Homodimer; disulfide-linked. Heterodimer; disulfide-linked with MMP9. As to expression, detected in the ureteric bud in embryonic kidney (at protein level).

Its subcellular location is the secreted. It is found in the cytoplasmic granule lumen. The protein resides in the cytoplasmic vesicle lumen. Its function is as follows. Iron-trafficking protein involved in multiple processes such as apoptosis, innate immunity and renal development. Binds iron through association with 2,3-dihydroxybenzoic acid (2,3-DHBA), a siderophore that shares structural similarities with bacterial enterobactin, and delivers or removes iron from the cell, depending on the context. Iron-bound form (holo-24p3) is internalized following binding to the SLC22A17 (24p3R) receptor, leading to release of iron and subsequent increase of intracellular iron concentration. In contrast, association of the iron-free form (apo-24p3) with the SLC22A17 (24p3R) receptor is followed by association with an intracellular siderophore, iron chelation and iron transfer to the extracellular medium, thereby reducing intracellular iron concentration. Involved in apoptosis due to interleukin-3 (IL3) deprivation: iron-loaded form increases intracellular iron concentration without promoting apoptosis, while iron-free form decreases intracellular iron levels, inducing expression of the proapoptotic protein BCL2L11/BIM, resulting in apoptosis. Involved in innate immunity; limits bacterial proliferation by sequestering iron bound to microbial siderophores, such as enterobactin. Can also bind siderophores from M.tuberculosis. This is Neutrophil gelatinase-associated lipocalin (Lcn2) from Rattus norvegicus (Rat).